A 443-amino-acid polypeptide reads, in one-letter code: UDP-N-acetylmuramate--L-alanine ligase (443 aa).

110-116 (GAHGKTS) contributes to the ATP binding site.

The protein belongs to the MurCDEF family.

It is found in the cytoplasm. The catalysed reaction is UDP-N-acetyl-alpha-D-muramate + L-alanine + ATP = UDP-N-acetyl-alpha-D-muramoyl-L-alanine + ADP + phosphate + H(+). It functions in the pathway cell wall biogenesis; peptidoglycan biosynthesis. Functionally, cell wall formation. The sequence is that of UDP-N-acetylmuramate--L-alanine ligase from Streptococcus equi subsp. zooepidemicus (strain H70).